Consider the following 226-residue polypeptide: uncharacterized protein (226 aa).

It belongs to the mimivirus L246/L426 family.

This is an uncharacterized protein from Acanthamoeba polyphaga mimivirus (APMV).